The following is a 540-amino-acid chain: Chaperonin GroEL (540 aa).

ATP contacts are provided by residues T30–P33, K51, D87–T91, G415, and D495.

This sequence belongs to the chaperonin (HSP60) family. In terms of assembly, forms a cylinder of 14 subunits composed of two heptameric rings stacked back-to-back. Interacts with the co-chaperonin GroES.

Its subcellular location is the cytoplasm. The enzyme catalyses ATP + H2O + a folded polypeptide = ADP + phosphate + an unfolded polypeptide.. Its function is as follows. Together with its co-chaperonin GroES, plays an essential role in assisting protein folding. The GroEL-GroES system forms a nano-cage that allows encapsulation of the non-native substrate proteins and provides a physical environment optimized to promote and accelerate protein folding. The chain is Chaperonin GroEL from Serratia marcescens.